A 388-amino-acid chain; its full sequence is Arginine biosynthesis bifunctional protein ArgJ (388 aa).

The substrate site is built by T150, K172, T183, E263, N383, and S388. Residue T183 is the Nucleophile of the active site.

Belongs to the ArgJ family. In terms of assembly, heterotetramer of two alpha and two beta chains.

It localises to the cytoplasm. It carries out the reaction N(2)-acetyl-L-ornithine + L-glutamate = N-acetyl-L-glutamate + L-ornithine. The catalysed reaction is L-glutamate + acetyl-CoA = N-acetyl-L-glutamate + CoA + H(+). Its pathway is amino-acid biosynthesis; L-arginine biosynthesis; L-ornithine and N-acetyl-L-glutamate from L-glutamate and N(2)-acetyl-L-ornithine (cyclic): step 1/1. It participates in amino-acid biosynthesis; L-arginine biosynthesis; N(2)-acetyl-L-ornithine from L-glutamate: step 1/4. Catalyzes two activities which are involved in the cyclic version of arginine biosynthesis: the synthesis of N-acetylglutamate from glutamate and acetyl-CoA as the acetyl donor, and of ornithine by transacetylation between N(2)-acetylornithine and glutamate. This is Arginine biosynthesis bifunctional protein ArgJ from Corynebacterium glutamicum (strain ATCC 13032 / DSM 20300 / JCM 1318 / BCRC 11384 / CCUG 27702 / LMG 3730 / NBRC 12168 / NCIMB 10025 / NRRL B-2784 / 534).